Here is a 192-residue protein sequence, read N- to C-terminus: Probable cobalt-precorrin-6B C(15)-methyltransferase (decarboxylating) (192 aa).

S-adenosyl-L-methionine is bound by residues Thr-20, 44–48 (GSGTG), Glu-68, and Ala-96.

It belongs to the methyltransferase superfamily. Archaeal-type CbiT family.

The catalysed reaction is Co-precorrin-6B + S-adenosyl-L-methionine = Co-precorrin-7 + S-adenosyl-L-homocysteine + CO2. It functions in the pathway cofactor biosynthesis; adenosylcobalamin biosynthesis; cob(II)yrinate a,c-diamide from sirohydrochlorin (anaerobic route): step 8/10. Functionally, catalyzes the methylation of C-15 in cobalt-precorrin-6B followed by the decarboxylation of C-12 to form cobalt-precorrin-7. This Sulfurisphaera tokodaii (strain DSM 16993 / JCM 10545 / NBRC 100140 / 7) (Sulfolobus tokodaii) protein is Probable cobalt-precorrin-6B C(15)-methyltransferase (decarboxylating).